We begin with the raw amino-acid sequence, 443 residues long: Xaa-Pro dipeptidase (443 aa).

Residues Asp-246, Asp-257, His-339, Glu-384, and Glu-423 each contribute to the Mn(2+) site.

It belongs to the peptidase M24B family. Bacterial-type prolidase subfamily. The cofactor is Mn(2+).

The enzyme catalyses Xaa-L-Pro dipeptide + H2O = an L-alpha-amino acid + L-proline. Functionally, splits dipeptides with a prolyl residue in the C-terminal position. The polypeptide is Xaa-Pro dipeptidase (Enterobacter sp. (strain 638)).